Here is a 296-residue protein sequence, read N- to C-terminus: Phosphoribosylaminoimidazole-succinocarboxamide synthase (296 aa).

The protein belongs to the SAICAR synthetase family.

The catalysed reaction is 5-amino-1-(5-phospho-D-ribosyl)imidazole-4-carboxylate + L-aspartate + ATP = (2S)-2-[5-amino-1-(5-phospho-beta-D-ribosyl)imidazole-4-carboxamido]succinate + ADP + phosphate + 2 H(+). Its pathway is purine metabolism; IMP biosynthesis via de novo pathway; 5-amino-1-(5-phospho-D-ribosyl)imidazole-4-carboxamide from 5-amino-1-(5-phospho-D-ribosyl)imidazole-4-carboxylate: step 1/2. The chain is Phosphoribosylaminoimidazole-succinocarboxamide synthase from Geobacter sulfurreducens (strain ATCC 51573 / DSM 12127 / PCA).